Here is a 69-residue protein sequence, read N- to C-terminus: Large ribosomal subunit protein bL31 (69 aa).

Residues cysteine 16, cysteine 18, cysteine 36, and cysteine 39 each contribute to the Zn(2+) site.

This sequence belongs to the bacterial ribosomal protein bL31 family. Type A subfamily. In terms of assembly, part of the 50S ribosomal subunit. The cofactor is Zn(2+).

Its function is as follows. Binds the 23S rRNA. The polypeptide is Large ribosomal subunit protein bL31 (Kosmotoga olearia (strain ATCC BAA-1733 / DSM 21960 / TBF 19.5.1)).